The primary structure comprises 280 residues: Homeobox protein SMOX-1 (280 aa).

The disordered stretch occupies residues 61–88; that stretch reads PNNNSFQLNTTNDSNNNNTTNNGNDSRS. Positions 69–85 are enriched in low complexity; sequence NTTNDSNNNNTTNNGND. The Antp-type hexapeptide motif lies at 214-219; that stretch reads VYPWMN. The segment at residues 229-280 is a DNA-binding region (homeobox); that stretch reads QKRTRQTYTRYQTLELEKEFHFNKYLTRRRRIEIAHTLTLTERQIKIWFQNR.

The protein belongs to the Antp homeobox family.

Its subcellular location is the nucleus. This chain is Homeobox protein SMOX-1 (SMOX-1), found in Schistosoma mansoni (Blood fluke).